Consider the following 175-residue polypeptide: ADP-ribosylation factor 6 (175 aa).

Residue Gly2 is the site of N-myristoyl glycine attachment. Lys3 carries N6-myristoyl lysine lipidation. Residues 23 to 28, 41 to 44, 63 to 67, 122 to 125, and 155 to 156 contribute to the GTP site; these read AAGKTT, TIPT, DVGGQ, NKQD, and CA.

It belongs to the small GTPase superfamily. Arf family. As to quaternary structure, interacts (when activated) with GGA1, GGA2 and GGA3; the interaction is required for proper subcellular location of GGA1, GGA2 and GGA3. Interacts with PIP5K1C. Interacts with USP6 (via Rab-GAP TBC domain). Interacts with RAB11FIP3 and RAB11FIP4. Interacts with HERC1. Interacts with ARHGAP21. Interacts with ASAP3; the interaction is stabilized by calcium ions. Interacts with NCS1/FREQ at the plasma membrane. Interacts with TBC1D24. Interacts with ECPAS. Interacts with MICALL1. Interacts with SPAG9 homodimers, forming heterotetramers. Interacts with CYTH3. Interacts with ASAP2. Interacts with UACA. Interacts with KIF23, forming heterodimers and heterotetramers. Interacts with C9orf72. Interacts (GTP-bound form) with TJAP1/PILT. Interacts with PRKAA2. Interacts with CD36 (when palmitoylated); this interaction mediates CD36 transport from the Golgi to the plasma membrane. Interacts with APBB1. (Microbial infection) Interacts with the V.cholerae enterotoxin subunit A1; this causes a conformation change so that the toxin can bind NAD and catalyze the ADP-ribosylation of Gs alpha. In terms of assembly, (Microbial infection) Interacts with EspG from enteropathogenic E.coli. As to quaternary structure, (Microbial infection) Identified in a complex with RAB1A and EspG from enteropathogenic E.coli. (Microbial infection) Interacts with human enterovirus 71 protein VP1. Post-translationally, GTP-bound form is myristoylated on Lys-3 by NMT1 and NMT2, allowing ARF6 to remain on membranes during the GTPase cycle, thereby promoting its activity. GDP-bound inactive form is demyristoylated on Lys-3 by SIRT2 at early endosomes or endocytic recycling compartment to allow its efficient activation by a guanine exchange factor (GEF) after GDP release. Ubiquitous, with higher levels in heart, substantia nigra, and kidney.

Its subcellular location is the cytoplasm. The protein localises to the cytosol. The protein resides in the cell membrane. It is found in the endosome membrane. It localises to the recycling endosome membrane. Its subcellular location is the cell projection. The protein localises to the filopodium membrane. The protein resides in the ruffle. It is found in the cleavage furrow. It localises to the midbody. Its subcellular location is the midbody ring. The protein localises to the early endosome membrane. The protein resides in the golgi apparatus. It is found in the trans-Golgi network membrane. The catalysed reaction is GTP + H2O = GDP + phosphate + H(+). With respect to regulation, activation is generally mediated by a guanine exchange factor (GEF), while inactivation through hydrolysis of bound GTP is catalyzed by a GTPase activating protein (GAP). Activated by ASAP3. Inactivated by ACAP1 and ACAP2. Activated by NGF via NTRK1. Activated by PRKAA2 through its C-terminal regulatory domain. Its function is as follows. GTP-binding protein involved in protein trafficking that regulates endocytic recycling and cytoskeleton remodeling. GTP-bound form plays an important role in the transport of multiple palmitoylated proteins form the Golgi to the plasma membrane. Required for normal completion of mitotic cytokinesis. Plays a role in the reorganization of the actin cytoskeleton and the formation of stress fibers. Involved in the regulation of dendritic spine development, contributing to the regulation of dendritic branching and filopodia extension. Potentiates the neurite outgrowth in primary neurons by interacting with the molecular adapter APBB1. Plays an important role in membrane trafficking, during junctional remodeling and epithelial polarization. Regulates surface levels of adherens junction proteins such as CDH1. Required for NTRK1 sorting to the recycling pathway from early endosomes. In terms of biological role, (Microbial infection) Functions as an allosteric activator of the cholera toxin catalytic subunit, an ADP-ribosyltransferase. Functionally, (Microbial infection) Plays a key role in the endocytosis of enterovirus 71 and thus viral entry into brain microvascular endothelial cells. The chain is ADP-ribosylation factor 6 from Homo sapiens (Human).